A 774-amino-acid chain; its full sequence is Mastermind-like domain-containing protein 1 (774 aa).

Disordered stretches follow at residues 257–279 (STGISYSIPSTSKQIVSPSSSMA), 310–365 (LAAS…PQSL), 386–421 (ALLSSMTSSSNAALGPAMPYAPEKLPSPALTQQPQF), 442–473 (HLMSALPASNPGPSPPYRPEKLSSPGLPQQSF), 525–609 (GMAS…QPDH), 656–678 (PQHQHGNSFTSRQDPQPGDVSPS), and 755–774 (LPSCDATARGTEIRSYGNDP). Over residues 331–361 (LPPPGLSPPYRPVPSPHPPPLPLPPPPPPFS) the composition is skewed to pro residues. Residues 386–397 (ALLSSMTSSSNA) are compositionally biased toward polar residues. The segment covering 574–609 (QQPTPTQASSATASSTATATLQLQQQQQQQQQQPDH) has biased composition (low complexity). Positions 656 to 669 (PQHQHGNSFTSRQD) are enriched in polar residues. Ser676 is subject to Phosphoserine.

This sequence belongs to the mastermind family. As to expression, expressed in fetal brain, fetal ovary and fetal testis. Expressed in adult brain, ovary, skin, testis, uterus. Highly expressed in skeletal muscle.

Its subcellular location is the nucleus. Its function is as follows. Transactivates the HES3 promoter independently of NOTCH proteins. HES3 is a non-canonical NOTCH target gene which lacks binding sites for RBPJ. The sequence is that of Mastermind-like domain-containing protein 1 (MAMLD1) from Homo sapiens (Human).